A 215-amino-acid chain; its full sequence is Virulence protein YscR (215 aa).

4 helical membrane-spanning segments follow: residues 10-30 (LIGILFLLSILPLIIVMGTSF), 53-73 (IALYGLALVLSLFIMGPTLLA), 156-176 (IGLLIYLPFLAIDLLISNILL), and 188-208 (ISLPFKLLIFLLAGGWDLTLA).

It belongs to the FliP/MopC/SpaP family.

It localises to the cell membrane. This chain is Virulence protein YscR (yscR), found in Salmonella typhimurium (strain LT2 / SGSC1412 / ATCC 700720).